A 368-amino-acid polypeptide reads, in one-letter code: N-acetylneuraminate epimerase (368 aa).

The signal sequence occupies residues 1–19 (MNKTIMALAIMMASFAANA). Kelch repeat units follow at residues 40 to 84 (TVYI…AFID), 86 to 137 (NLYV…FVHN), 139 to 173 (KAYVTGGVNQNIFNGYFEDLNEAGKDSTAIDKINA), 174 to 219 (HYFD…VNKG), 222 to 265 (TWLI…VAGG), 287 to 336 (ENYQ…PWNN), and 338 to 367 (LLIIGGETAGGKAVTDSVLISVKDNKVTVQ). E228 functions as the Proton acceptor in the catalytic mechanism.

This sequence belongs to the NanM family. In terms of assembly, homodimer.

The protein resides in the periplasm. It catalyses the reaction N-acetyl-alpha-neuraminate = N-acetyl-beta-neuraminate. In terms of biological role, converts alpha-N-acetylneuranimic acid (Neu5Ac) to the beta-anomer, accelerating the equilibrium between the alpha- and beta-anomers. Probably facilitates sialidase-negative bacteria to compete successfully for limited amounts of extracellular Neu5Ac, which is likely taken up in the beta-anomer. In addition, the rapid removal of sialic acid from solution might be advantageous to the bacterium to damp down host responses. The protein is N-acetylneuraminate epimerase of Shigella flexneri serotype 5b (strain 8401).